The sequence spans 140 residues: MKTFNISQQDLELVEVATEKITMLYEDNKHHVGAAIRTKTGEIISAVHIEAYIGRVTVCAEAIAIGSAVSNGQKDFDTIVAVRHPYSDEVDRSIRVVSPCGMCRELISDYAPDCFVLIEMNGKLVKTTIEELIPLKYTRN.

In terms of domain architecture, CMP/dCMP-type deaminase spans 8 to 140; the sequence is QQDLELVEVA…ELIPLKYTRN (133 aa). Cysteine 59 is a Zn(2+) binding site. Residue glutamate 61 is the Proton donor of the active site. Residues cysteine 100 and cysteine 103 each contribute to the Zn(2+) site.

Belongs to the cytidine and deoxycytidylate deaminase family. Zn(2+) is required as a cofactor.

The enzyme catalyses blasticidin S + H2O + H(+) = deaminohydroxyblasticidin S + NH4(+). Functionally, catalyzes the deamination of the cytosine moiety of the antibiotics blasticidin S, cytomycin and acetylblasticidin S. This chain is Blasticidin-S deaminase (bsr), found in Bacillus cereus.